The primary structure comprises 629 residues: Methyl-accepting chemotaxis protein PctB (629 aa).

Residues 1-10 are Cytoplasmic-facing; sequence MIKSLKFSHK. The chain crosses the membrane as a helical span at residues 11–31; it reads ILLAAALVVIATFSLFTLYND. Residues 32 to 276 lie on the Periplasmic side of the membrane; it reads SLQRASIRED…AYAMLTKLRT (245 aa). The region spanning 37–260 is the Cache domain; that stretch reads SIREDLEDYL…LSGLDWYIGI (224 aa). L-arginine contacts are provided by residues Y109, S115, Y121, 126–128, E146, and D173; that span reads RPW. L-glutamine is bound by residues S115, Y121, 126 to 128, 144 to 146, and D173; these read RPW and YME. Residues 277 to 297 form a helical membrane-spanning segment; it reads SAIVAALIAVVAIVLLLGMLI. The HAMP domain occupies 298–352; it reads RVLMQPLTDMGRAMQDIAQGEGDLTKRLKVTSNDEFGALAISFNRFVERIHESIR. Residues 298-629 lie on the Cytoplasmic side of the membrane; it reads RVLMQPLTDM…LRQLVDSFKI (332 aa). The region spanning 357-593 is the Methyl-accepting transducer domain; the sequence is TARQLHDVAQ…SLNMDITEIN (237 aa). The tract at residues 405 to 424 is disordered; it reads RNAADASHHASDANHQAEDG. A compositionally biased stretch (basic and acidic residues) spans 410 to 424; it reads ASHHASDANHQAEDG.

Belongs to the methyl-accepting chemotaxis (MCP) protein family. Monomer in the absence and presence of ligands.

It is found in the cell inner membrane. Functionally, chemotactic-signal transducers respond to changes in the concentration of attractants and repellents in the environment, transduce a signal from the outside to the inside of the cell, and facilitate sensory adaptation through the variation of the level of methylation. Responds to L-Arg, L-Gln, L-Ala, L-Glu, L-Lys, L-Met and L-Tyr. Also involved in repellent responses to trichloroethylene (TCE), chloroform and methylthiocyanate. This Pseudomonas aeruginosa (strain ATCC 15692 / DSM 22644 / CIP 104116 / JCM 14847 / LMG 12228 / 1C / PRS 101 / PAO1) protein is Methyl-accepting chemotaxis protein PctB (pctB).